The primary structure comprises 496 residues: Glycylpeptide N-tetradecanoyltransferase 1 (496 aa).

Residues 1–82 form a disordered region; sequence MADESETAVK…SAQDQPVKMN (82 aa). A phosphoserine mark is found at Ser-31 and Ser-47. Basic residues predominate over residues 55–66; that stretch reads KKKKKKQKKKKE. The residue at position 83 (Ser-83) is a Phosphoserine. 11 residues coordinate tetradecanoyl-CoA: Gln-118, Phe-119, Trp-120, Phe-247, Leu-248, Cys-249, Val-250, Ser-256, Arg-258, Val-259, and Ala-260.

It belongs to the NMT family.

The protein resides in the cytoplasm. It is found in the cytosol. The protein localises to the membrane. The catalysed reaction is N-terminal glycyl-[protein] + tetradecanoyl-CoA = N-tetradecanoylglycyl-[protein] + CoA + H(+). The enzyme catalyses N-terminal glycyl-L-lysyl-[protein] + tetradecanoyl-CoA = N-terminal glycyl-(N(6)-tetradecanoyl)-L-lysyl-[protein] + CoA + H(+). In terms of biological role, adds a myristoyl group to the N-terminal glycine residue of certain cellular and viral proteins. Also able to mediate N-terminal lysine myristoylation of proteins: catalyzes myristoylation of ARF6 on both 'Gly-2' and 'Lys-3'. Lysine myristoylation is required to maintain ARF6 on membranes during the GTPase cycle. This is Glycylpeptide N-tetradecanoyltransferase 1 (NMT1) from Pongo abelii (Sumatran orangutan).